Here is a 65-residue protein sequence, read N- to C-terminus: uncharacterized protein (65 aa).

The tract at residues 1-30 (MPAASLESLLPPPPGKLPSPPLRPHGKFQR) is disordered. The segment covering 10-23 (LPPPPGKLPSPPLR) has biased composition (pro residues).

This is an uncharacterized protein from Homo sapiens (Human).